We begin with the raw amino-acid sequence, 216 residues long: GTP cyclohydrolase-2 (216 aa).

Residue 51–55 (RIHSE) participates in GTP binding. The Zn(2+) site is built by cysteine 56, cysteine 67, and cysteine 69. GTP-binding positions include glutamine 72, 94-96 (EGR), and threonine 116. Residue aspartate 128 is the Proton acceptor of the active site. Arginine 130 acts as the Nucleophile in catalysis. GTP is bound by residues threonine 151 and lysine 156.

Belongs to the GTP cyclohydrolase II family. Requires Zn(2+) as cofactor.

The enzyme catalyses GTP + 4 H2O = 2,5-diamino-6-hydroxy-4-(5-phosphoribosylamino)-pyrimidine + formate + 2 phosphate + 3 H(+). Its pathway is cofactor biosynthesis; riboflavin biosynthesis; 5-amino-6-(D-ribitylamino)uracil from GTP: step 1/4. Catalyzes the conversion of GTP to 2,5-diamino-6-ribosylamino-4(3H)-pyrimidinone 5'-phosphate (DARP), formate and pyrophosphate. In Haemophilus influenzae (strain 86-028NP), this protein is GTP cyclohydrolase-2.